Reading from the N-terminus, the 286-residue chain is Master replication protein (286 aa).

A CRESS-DNA virus Rep endonuclease domain is found at 2–96 (ARQVICWCFT…VEGPWEFGEF (95 aa)). Positions 9–12 (CFTL) match the RCR-1 motif. A divalent metal cation contacts are provided by E33 and H41. The RCR-2 motif lies at 41 to 43 (HYQ). The Nuclear localization signal motif lies at 50–70 (KRTSLVQMKKLLPGAHLEKRR). Y79 functions as the For DNA cleavage activity in the catalytic mechanism. Positions 79–82 (YAMK) match the RCR-3 motif. D84 serves as a coordination point for a divalent metal cation. Positions 96 to 102 (FKEVLED) match the Nuclear localization signal motif. 180 to 188 (GPQGGEGKT) contacts ATP.

The protein belongs to the nanoviridea/circoviridae replication-associated protein family. Homooligomer (Potential). Rep binds to repeated DNA motifs (iterons). The cofactor is Mg(2+). Mn(2+) is required as a cofactor.

It is found in the host nucleus. The catalysed reaction is ATP + H2O = ADP + phosphate + H(+). Its function is as follows. Essential for the replication of all genomic viral ssDNA (trans-replication). The closed circular ssDNA genome is first converted to a superhelical dsDNA. Rep binds a specific hairpin at the genome origin of replication. Introduces an endonucleolytic nick within the conserved sequence 5'-A[GT]TATTAC-3' in the intergenic region of the genome, thereby initiating the rolling circle replication (RCR). Following cleavage, binds covalently to the 5'-phosphate of DNA as a tyrosyl ester. The cleavage gives rise to a free 3'-OH that serves as a primer for the cellular DNA polymerase. The polymerase synthesizes the (+) strand DNA by rolling circle mechanism. After one round of replication, a Rep-catalyzed nucleotidyl transfer reaction releases a circular single-stranded virus genome, thereby terminating the replication. Displays origin-specific DNA cleavage, nucleotidyl transferase, ATPase and helicase activities. This Subterranean clover stunt virus (strain F) (SCSV) protein is Master replication protein (DNA-R).